The following is a 231-amino-acid chain: Cytochrome c oxidase subunit 2 (231 aa).

Over 1 to 30 (MNNFFQGYNLLFQHSLFASYMDWFHSFNCS) the chain is Mitochondrial intermembrane. Residues 31–52 (LLLGVLVFVTLLFGYLIFGTFY) traverse the membrane as a helical segment. Over 53–69 (FKSKKIEYQFGELLCSI) the chain is Mitochondrial matrix. Residues 70–89 (FPTIILLMQMVPSLSLLYYY) form a helical membrane-spanning segment. At 90 to 231 (GLMNLDSNLT…FKSWCFGTME (142 aa)) the chain is on the mitochondrial intermembrane side. 6 residues coordinate Cu cation: His164, Cys199, Glu201, Cys203, His207, and Met210. Glu201 lines the Mg(2+) pocket.

This sequence belongs to the cytochrome c oxidase subunit 2 family. In terms of assembly, component of the cytochrome c oxidase (complex IV, CIV), a multisubunit enzyme composed of a catalytic core of 3 subunits and several supernumerary subunits. The complex exists as a monomer or a dimer and forms supercomplexes (SCs) in the inner mitochondrial membrane with ubiquinol-cytochrome c oxidoreductase (cytochrome b-c1 complex, complex III, CIII). Requires Cu cation as cofactor.

The protein resides in the mitochondrion inner membrane. The catalysed reaction is 4 Fe(II)-[cytochrome c] + O2 + 8 H(+)(in) = 4 Fe(III)-[cytochrome c] + 2 H2O + 4 H(+)(out). Component of the cytochrome c oxidase, the last enzyme in the mitochondrial electron transport chain which drives oxidative phosphorylation. The respiratory chain contains 3 multisubunit complexes succinate dehydrogenase (complex II, CII), ubiquinol-cytochrome c oxidoreductase (cytochrome b-c1 complex, complex III, CIII) and cytochrome c oxidase (complex IV, CIV), that cooperate to transfer electrons derived from NADH and succinate to molecular oxygen, creating an electrochemical gradient over the inner membrane that drives transmembrane transport and the ATP synthase. Cytochrome c oxidase is the component of the respiratory chain that catalyzes the reduction of oxygen to water. Electrons originating from reduced cytochrome c in the intermembrane space (IMS) are transferred via the dinuclear copper A center (CU(A)) of subunit 2 and heme A of subunit 1 to the active site in subunit 1, a binuclear center (BNC) formed by heme A3 and copper B (CU(B)). The BNC reduces molecular oxygen to 2 water molecules using 4 electrons from cytochrome c in the IMS and 4 protons from the mitochondrial matrix. This is Cytochrome c oxidase subunit 2 from Caenorhabditis elegans.